The sequence spans 202 residues: Syndecan-2 (202 aa).

Positions 1-18 (MQRAWILLTLGLMACVSA) are cleaved as a signal peptide. Residues 19–145 (ETRTELTSDK…HSDNLFKRTE (127 aa)) lie on the Extracellular side of the membrane. Residues S41, S55, and S57 are each glycosylated (O-linked (Xyl...) (glycosaminoglycan) serine). Disordered stretches follow at residues 41–63 (SGVYPIDDDDYSSASGSGADEDI) and 88–118 (ETMTLKTQSITPAQTESPEETDKEEVDISEA). Polar residues predominate over residues 91 to 103 (TLKTQSITPAQTE). The segment covering 104–117 (SPEETDKEEVDISE) has biased composition (acidic residues). Position 116 is a phosphoserine (S116). Residues 146-170 (VLAAVIAGGVIGFLFAIFLILLLVY) form a helical membrane-spanning segment. The Cytoplasmic portion of the chain corresponds to 171–202 (RMRKKDEGSYDLGERKPSSAAYQKAPTKEFYA). Residues 179-202 (SYDLGERKPSSAAYQKAPTKEFYA) are disordered. S188 carries the phosphoserine modification.

This sequence belongs to the syndecan proteoglycan family. Interacts (via cytoplasmic domain) with SARM1. Forms a complex with SDCBP and PDCD6IP. Post-translationally, O-glycosylated; contains both heparan sulfate and chondroitin sulfate. Phosphorylated on serine residues. In terms of tissue distribution, preferential expression in cells of mesenchymal origin.

The protein resides in the membrane. Cell surface proteoglycan which regulates dendritic arbor morphogenesis. The polypeptide is Syndecan-2 (Sdc2) (Mus musculus (Mouse)).